The following is a 94-amino-acid chain: Large ribosomal subunit protein bL27 (94 aa).

Residues 1–9 (MLKMNLQFF) constitute a propeptide that is removed on maturation.

It belongs to the bacterial ribosomal protein bL27 family. Post-translationally, the N-terminus is cleaved by ribosomal processing cysteine protease Prp.

In Halalkalibacterium halodurans (strain ATCC BAA-125 / DSM 18197 / FERM 7344 / JCM 9153 / C-125) (Bacillus halodurans), this protein is Large ribosomal subunit protein bL27.